The following is a 32-amino-acid chain: Jingzhaotoxin F4-32.60 (32 aa).

3 disulfides stabilise this stretch: C2–C17, C9–C22, and C16–C29. Residue D31 is modified to Aspartic acid 1-amide.

It belongs to the neurotoxin 10 (Hwtx-1) family. 30 (Jztx-14) subfamily. Amidated as well as non-amidated forms are found in the venom. Expressed by the venom gland.

Its subcellular location is the secreted. Its function is as follows. Probable ion channel inhibitor. This Chilobrachys guangxiensis (Chinese earth tiger tarantula) protein is Jingzhaotoxin F4-32.60.